Reading from the N-terminus, the 85-residue chain is Putative membrane protein insertion efficiency factor (85 aa).

This sequence belongs to the UPF0161 family.

Its subcellular location is the cell inner membrane. In terms of biological role, could be involved in insertion of integral membrane proteins into the membrane. The protein is Putative membrane protein insertion efficiency factor of Serratia proteamaculans (strain 568).